Consider the following 38-residue polypeptide: Photosystem II reaction center protein T (38 aa).

The helical transmembrane segment at 3 to 23 (ALVYTFLLVSTLGIIFFAIFF) threads the bilayer.

Belongs to the PsbT family. In terms of assembly, PSII is composed of 1 copy each of membrane proteins PsbA, PsbB, PsbC, PsbD, PsbE, PsbF, PsbH, PsbI, PsbJ, PsbK, PsbL, PsbM, PsbT, PsbY, PsbZ, Psb30/Ycf12, at least 3 peripheral proteins of the oxygen-evolving complex and a large number of cofactors. It forms dimeric complexes.

The protein localises to the plastid. It localises to the chloroplast thylakoid membrane. Found at the monomer-monomer interface of the photosystem II (PS II) dimer, plays a role in assembly and dimerization of PSII. PSII is a light-driven water plastoquinone oxidoreductase, using light energy to abstract electrons from H(2)O, generating a proton gradient subsequently used for ATP formation. In Secale cereale (Rye), this protein is Photosystem II reaction center protein T.